The chain runs to 326 residues: Pyruvate dehydrogenase E1 component subunit alpha (326 aa).

As to quaternary structure, heterodimer of an alpha and a beta chain. It depends on thiamine diphosphate as a cofactor.

It catalyses the reaction N(6)-[(R)-lipoyl]-L-lysyl-[protein] + pyruvate + H(+) = N(6)-[(R)-S(8)-acetyldihydrolipoyl]-L-lysyl-[protein] + CO2. Its function is as follows. The pyruvate dehydrogenase complex catalyzes the overall conversion of pyruvate to acetyl-CoA and CO(2). It contains multiple copies of three enzymatic components: pyruvate dehydrogenase (E1), dihydrolipoamide acetyltransferase (E2) and lipoamide dehydrogenase (E3). The polypeptide is Pyruvate dehydrogenase E1 component subunit alpha (pdhA) (Rickettsia typhi (strain ATCC VR-144 / Wilmington)).